Here is a 401-residue protein sequence, read N- to C-terminus: Argininosuccinate synthase (401 aa).

An ATP-binding site is contributed by 9-17; it reads AYSGGLDTS. An L-citrulline-binding site is contributed by tyrosine 87. An ATP-binding site is contributed by glycine 117. L-aspartate contacts are provided by threonine 119, asparagine 123, and aspartate 124. Asparagine 123 serves as a coordination point for L-citrulline. The L-citrulline site is built by arginine 127, serine 176, serine 185, glutamate 261, and tyrosine 273.

The protein belongs to the argininosuccinate synthase family. Type 1 subfamily. Homotetramer.

The protein localises to the cytoplasm. The catalysed reaction is L-citrulline + L-aspartate + ATP = 2-(N(omega)-L-arginino)succinate + AMP + diphosphate + H(+). Its pathway is amino-acid biosynthesis; L-arginine biosynthesis; L-arginine from L-ornithine and carbamoyl phosphate: step 2/3. The sequence is that of Argininosuccinate synthase from Prosthecochloris aestuarii (strain DSM 271 / SK 413).